The following is a 200-amino-acid chain: Small ribosomal subunit protein uS4c (200 aa).

Residues 20–42 (GLTRKTTTRTSRPGQHGTQARKP) are disordered. Polar residues predominate over residues 23 to 37 (RKTTTRTSRPGQHGT). An S4 RNA-binding domain is found at 90-152 (MRLDNVIFRL…PKSQSIVKNY (63 aa)).

It belongs to the universal ribosomal protein uS4 family. As to quaternary structure, part of the 30S ribosomal subunit. Contacts protein S5. The interaction surface between S4 and S5 is involved in control of translational fidelity.

It localises to the plastid. The protein localises to the chloroplast. Its function is as follows. One of the primary rRNA binding proteins, it binds directly to 16S rRNA where it nucleates assembly of the body of the 30S subunit. Functionally, with S5 and S12 plays an important role in translational accuracy. The sequence is that of Small ribosomal subunit protein uS4c (rps4) from Guillardia theta (Cryptophyte).